A 249-amino-acid chain; its full sequence is MGGFADTGQVSVRIRWVITMRAGGVLVSPFDFLDLGDHVGDDPDCGGHLSRAWLVAAIGLGVDRVVWMSQVHGDRVKVVHEPCDAVVDNTDALVTRTSQPALPVVTIHCVPVLLSDARPGVTAAVHVGEGRGSARCASPCDGYDAGPGCVRWRRDIAVLLGPAVSGRNYEVPVVIADGVEAASPDSCTTTRISAGTPGLDLRTGIACQFRDLGVMSIEDDPRRTVADRALFSHLQTVSTGRLASLVWME.

Positions 72, 109, and 126 each coordinate Zn(2+).

It belongs to the purine nucleoside phosphorylase YfiH/LACC1 family. As to quaternary structure, homodimer. It depends on Cu(2+) as a cofactor. Zn(2+) is required as a cofactor.

It catalyses the reaction adenosine + phosphate = alpha-D-ribose 1-phosphate + adenine. The catalysed reaction is S-methyl-5'-thioadenosine + phosphate = 5-(methylsulfanyl)-alpha-D-ribose 1-phosphate + adenine. The enzyme catalyses inosine + phosphate = alpha-D-ribose 1-phosphate + hypoxanthine. It carries out the reaction adenosine + H2O + H(+) = inosine + NH4(+). In terms of biological role, purine nucleoside enzyme that catalyzes the phosphorolysis of adenosine and inosine nucleosides, yielding D-ribose 1-phosphate and the respective free bases, adenine and hypoxanthine. Also catalyzes the phosphorolysis of S-methyl-5'-thioadenosine into adenine and S-methyl-5-thio-alpha-D-ribose 1-phosphate. Also has adenosine deaminase activity. The sequence is that of Purine nucleoside phosphorylase ML0918 from Mycobacterium leprae (strain TN).